The following is a 2200-amino-acid chain: Bromodomain and WD repeat-containing DDB_G0285837 (2200 aa).

Disordered regions lie at residues Gly-137–Asn-178, Val-194–Pro-245, and Asp-259–Asn-288. Low complexity-rich tracts occupy residues Asn-161 to Asn-176, Asn-203 to Thr-242, and Asp-259 to Gln-273. WD repeat units follow at residues Gly-352–Thr-391, Gly-394–Ile-433, Ser-442–Ser-483, Gly-548–Val-586, Gly-591–His-630, Arg-653–Glu-691, Glu-694–Val-736, and Gly-741–Asn-780. Composition is skewed to acidic residues over residues Asp-918–Asn-933 and Gln-955–Asp-968. Disordered stretches follow at residues Asp-918–Thr-1180, Asn-1262–Asp-1297, Glu-1461–Asn-1538, and Asn-1662–Asn-1703. Positions Met-974 to Arg-1000 are enriched in basic residues. Residues Gly-1052–Asp-1074 are compositionally biased toward acidic residues. Low complexity predominate over residues Ser-1109–Ser-1132. A compositionally biased stretch (basic residues) spans Asn-1133–Ser-1164. 2 stretches are compositionally biased toward low complexity: residues Asn-1262 to Asn-1292 and Glu-1461 to Asn-1525. Residues Glu-1722 to Ala-1823 form the Bromo domain. A disordered region spans residues Asp-1850–Asn-2200. Low complexity predominate over residues Leu-1878 to Ser-1888. A compositionally biased stretch (polar residues) spans Thr-1910–Ser-1920. The span at Thr-1945–Thr-1958 shows a compositional bias: low complexity. Acidic residues-rich tracts occupy residues Asp-2016–Gly-2028, Glu-2057–Tyr-2073, and Ser-2104–Ser-2113. Over residues Asp-2114–Glu-2124 the composition is skewed to low complexity. Residues Ser-2125 to Glu-2138 show a composition bias toward acidic residues. Positions Ser-2170–Asn-2185 are enriched in low complexity. Residues Lys-2190 to Asn-2200 are compositionally biased toward basic residues.

The protein is Bromodomain and WD repeat-containing DDB_G0285837 of Dictyostelium discoideum (Social amoeba).